The primary structure comprises 274 residues: Tryptase beta-2 (274 aa).

Residues 1-19 (MLKLLLLLALSPLASLVHA) form the signal peptide. Positions 20–29 (APCPVKQRVG) are cleaved as a propeptide — activation peptide. The Peptidase S1 domain maps to 30–271 (IVGGREASES…YLDWIHRYVP (242 aa)). A disulfide bridge connects residues cysteine 58 and cysteine 74. The Charge relay system role is filled by histidine 73. The residue at position 96 (tyrosine 96) is a Phosphotyrosine. An N-linked (GlcNAc...) asparagine glycan is attached at asparagine 104. Residue aspartate 120 is the Charge relay system of the active site. The N-linked (GlcNAc...) asparagine glycan is linked to asparagine 131. Intrachain disulfides connect cysteine 154–cysteine 229, cysteine 187–cysteine 210, and cysteine 219–cysteine 247. Serine 223 acts as the Charge relay system in catalysis.

The protein belongs to the peptidase S1 family. Tryptase subfamily. Homotetramer. The active tetramer is converted to inactive monomers at neutral and acidic pH in the absence of heparin. Low concentrations of inactive monomers become active monomers at pH 6.0 in the presence of heparin. When the concentration of active monomers is higher, they convert to active monomers and then to active tetramers. These monomers are active and functionally distinct from the tetrameric enzyme. In contrast to the hidden active sites in the tetrameric form, the active site of the monomeric form is accessible for macromolecular proteins and inhibitors, e.g. fibrinogen which is a substrate for the monomeric but not for the tetrameric form. The monomeric form forms a complex with SERPINB6.

The protein localises to the secreted. The enzyme catalyses Preferential cleavage: Arg-|-Xaa, Lys-|-Xaa, but with more restricted specificity than trypsin.. Tryptase is the major neutral protease present in mast cells and is secreted upon the coupled activation-degranulation response of this cell type. Plays a role in innate immunity. In Rattus norvegicus (Rat), this protein is Tryptase beta-2 (Tpsb2).